The primary structure comprises 295 residues: Tyrosine recombinase XerD (295 aa).

In terms of domain architecture, Core-binding (CB) spans Met1–Leu85. The Tyr recombinase domain maps to Lys106 to Asn289. Catalysis depends on residues Arg146, Lys170, His241, Arg244, and His267. Residue Tyr276 is the O-(3'-phospho-DNA)-tyrosine intermediate of the active site.

Belongs to the 'phage' integrase family. XerD subfamily. As to quaternary structure, forms a cyclic heterotetrameric complex composed of two molecules of XerC and two molecules of XerD.

The protein resides in the cytoplasm. Site-specific tyrosine recombinase, which acts by catalyzing the cutting and rejoining of the recombining DNA molecules. The XerC-XerD complex is essential to convert dimers of the bacterial chromosome into monomers to permit their segregation at cell division. It also contributes to the segregational stability of plasmids. This chain is Tyrosine recombinase XerD, found in Staphylococcus saprophyticus subsp. saprophyticus (strain ATCC 15305 / DSM 20229 / NCIMB 8711 / NCTC 7292 / S-41).